Reading from the N-terminus, the 581-residue chain is Proline--tRNA ligase (581 aa).

It belongs to the class-II aminoacyl-tRNA synthetase family. ProS type 1 subfamily. Homodimer.

Its subcellular location is the cytoplasm. The enzyme catalyses tRNA(Pro) + L-proline + ATP = L-prolyl-tRNA(Pro) + AMP + diphosphate. Functionally, catalyzes the attachment of proline to tRNA(Pro) in a two-step reaction: proline is first activated by ATP to form Pro-AMP and then transferred to the acceptor end of tRNA(Pro). As ProRS can inadvertently accommodate and process non-cognate amino acids such as alanine and cysteine, to avoid such errors it has two additional distinct editing activities against alanine. One activity is designated as 'pretransfer' editing and involves the tRNA(Pro)-independent hydrolysis of activated Ala-AMP. The other activity is designated 'posttransfer' editing and involves deacylation of mischarged Ala-tRNA(Pro). The misacylated Cys-tRNA(Pro) is not edited by ProRS. This is Proline--tRNA ligase from Blochmanniella pennsylvanica (strain BPEN).